The following is a 631-amino-acid chain: uncharacterized protein (631 aa).

9 helical membrane passes run 42-62 (VLVG…IGGF), 76-96 (ALKL…GTLL), 106-128 (VLGL…GPAP), 152-172 (AGLT…GWLW), 344-364 (ALKY…FGFA), 366-386 (SYWI…VFTL), 398-418 (IGVI…YIAF), 429-449 (MLIV…ALVI), and 464-484 (IARL…TMLL).

It belongs to the YccS/YhfK family.

The protein localises to the cell membrane. This is an uncharacterized protein from Bacillus subtilis (strain 168).